Consider the following 235-residue polypeptide: Tetraspanin-8 (235 aa).

At 1–12 (MAGVSSCLKYSM) the chain is on the cytoplasmic side. The helical transmembrane segment at 13–33 (FFFNFLFWVCGTLILGLAIWV) threads the bilayer. Over 34–52 (RVSKDGKEIITSGDSSTNP) the chain is Extracellular. A helical membrane pass occupies residues 53–73 (FIAVNILIAVGSIIMVLGFLG). The Cytoplasmic segment spans residues 74 to 84 (CCGAVKESRCM). A helical transmembrane segment spans residues 85 to 105 (LLLFFIGLLLILILQVAAGIL). At 106 to 203 (GAAFKPEYNR…SLIKDLFEKN (98 aa)) the chain is on the extracellular side. Asn-118 carries N-linked (GlcNAc...) asparagine glycosylation. A helical transmembrane segment spans residues 204–224 (IIIVIGIAFGLAVIEILGLVF). Topologically, residues 225 to 235 (SMVLYCQIGSK) are cytoplasmic.

This sequence belongs to the tetraspanin (TM4SF) family. In terms of assembly, forms homooligomers. Interacts with MEP1B. Interacts with integrin alpha3/ITGA3. Interacts with RICTOR and MTOR. Interacts with ADAM17. Interacts with ECE1.

It is found in the cell membrane. In terms of biological role, structural component of specialized membrane microdomains known as tetraspanin-enriched microdomains (TERMs), which act as platforms for receptor clustering and signaling. Participates thereby in diverse biological functions such as cell signal transduction, migration and protein trafficking. Promotes ADAM17-mediated TNF-alpha processing through recruitment of ADAM17 to tetraspanin-enriched micro-domains (TEMs). Forms a complex with RICTOR and integrin alpha3/ITGA3 to mediate mTORC2 activation and AKT1 phosphorylation leading to cell migration. Reduces apoptosis and autophagy induced by high glucose levels through forming a complex with mTOR and RICTOR. Contributes to the maintenance of intestinal epithelial barrier and plays a role in the regulation of intestine inflammation by switching interferon gamma receptor 1/IFNGR1 from clathrin-dependent to lipid raft-dependent endocytosis route to limit STAT1 activation magnitude and duration. Acts as a modulator of the endothelin axis by associating with endothelin converting enzyme ECE1 and regulating its activity of conversion of the endothelin-1 precursor to endothelin. The polypeptide is Tetraspanin-8 (Tspan8) (Mus musculus (Mouse)).